The following is a 312-amino-acid chain: MEIAVFGGGAWGRALAFAFGEKNEVKIISRRDLNEPLKKLNDALISKGSAPIEQVDLQRGLKATLYVIAISVQHLREWFQNASLPKNAKVLIASKGIEVLNRAFVSEIAKDFIDPNSLCFLAGPSFAAEIIQGLPCALVIHSNNQALALEFANKTPSFIRAYAQQDIIGGEIAGAYKNVIAIAGGVCDGLKLGNSAKASLLSRGLVEMQRFGAFFGGKTETFLGLSGAGDLFLTANSILSRNYRVGLGLAQNKPLEVVLEELGEVAEGVKTTNAIVEIARKYGIYTPIASELALLLKGKSVLESMNDLIRRA.

NADPH is bound by residues tryptophan 11, arginine 30, arginine 31, and lysine 95. Residues lysine 95, glycine 123, and serine 125 each contribute to the sn-glycerol 3-phosphate site. Alanine 127 contributes to the NADPH binding site. Positions 177, 230, 240, 241, and 242 each coordinate sn-glycerol 3-phosphate. Catalysis depends on lysine 177, which acts as the Proton acceptor. Arginine 241 lines the NADPH pocket. Residues valine 265 and glutamate 267 each contribute to the NADPH site.

Belongs to the NAD-dependent glycerol-3-phosphate dehydrogenase family.

Its subcellular location is the cytoplasm. The enzyme catalyses sn-glycerol 3-phosphate + NAD(+) = dihydroxyacetone phosphate + NADH + H(+). It catalyses the reaction sn-glycerol 3-phosphate + NADP(+) = dihydroxyacetone phosphate + NADPH + H(+). It participates in membrane lipid metabolism; glycerophospholipid metabolism. Its function is as follows. Catalyzes the reduction of the glycolytic intermediate dihydroxyacetone phosphate (DHAP) to sn-glycerol 3-phosphate (G3P), the key precursor for phospholipid synthesis. This chain is Glycerol-3-phosphate dehydrogenase [NAD(P)+], found in Helicobacter pylori (strain P12).